The following is a 365-amino-acid chain: Probable dual-specificity RNA methyltransferase RlmN (365 aa).

The active-site Proton acceptor is the glutamate 108. Residues 114-352 (YPDRNTVCIS…SCTVRDTRGR (239 aa)) form the Radical SAM core domain. Cysteine 121 and cysteine 358 are oxidised to a cystine. The [4Fe-4S] cluster site is built by cysteine 128, cysteine 132, and cysteine 135. Residues 179–180 (GE), serine 213, 236–238 (SLH), and asparagine 315 each bind S-adenosyl-L-methionine. The active-site S-methylcysteine intermediate is the cysteine 358.

Belongs to the radical SAM superfamily. RlmN family. Requires [4Fe-4S] cluster as cofactor.

Its subcellular location is the cytoplasm. It carries out the reaction adenosine(2503) in 23S rRNA + 2 reduced [2Fe-2S]-[ferredoxin] + 2 S-adenosyl-L-methionine = 2-methyladenosine(2503) in 23S rRNA + 5'-deoxyadenosine + L-methionine + 2 oxidized [2Fe-2S]-[ferredoxin] + S-adenosyl-L-homocysteine. The catalysed reaction is adenosine(37) in tRNA + 2 reduced [2Fe-2S]-[ferredoxin] + 2 S-adenosyl-L-methionine = 2-methyladenosine(37) in tRNA + 5'-deoxyadenosine + L-methionine + 2 oxidized [2Fe-2S]-[ferredoxin] + S-adenosyl-L-homocysteine. Its function is as follows. Specifically methylates position 2 of adenine 2503 in 23S rRNA and position 2 of adenine 37 in tRNAs. The sequence is that of Probable dual-specificity RNA methyltransferase RlmN from Mycolicibacterium gilvum (strain PYR-GCK) (Mycobacterium gilvum (strain PYR-GCK)).